A 1776-amino-acid polypeptide reads, in one-letter code: TOG array regulator of axonemal microtubules protein 1 (1776 aa).

2 TOG regions span residues 94–311 and 351–595; these read EEET…RRLE and PQEL…MPSS. HEAT repeat units follow at residues 175-212, 214-246, 250-288, 344-383, 389-426, 430-465, 466-503, and 505-542; these read AFSLALLPQLVVSLREDNPALRKDALQILHICLRRSSG, VLRTLIQGLESPDARLRASTALLLPILFTPEDL, LDLTEVIISLARKLGDQEMEEESETAFSSLQQIGERLGQ, NLKFEIIPQELHARLLDQEDYKNRTQAVEELKQLLGKFNP, ASLVGFISLLYNLLDDSNFKVVHGTLQVLHLLVIRLGE, QFLGPVIAASVKVLADNKLVIKQEYMKIFLKLMKEV, GPQRVLSLLLENLKHKHSRVREEVVNICICSLLTYPSE, and FDLPKLSFDLAPALVDSKRRVRQAALEAFAVLASSMGS. 4 disordered regions span residues 655–676, 817–921, 970–1000, and 1062–1084; these read KNKLPWENEQPGVMGENQTSNS, ILPS…RGIN, HSSLRSLRNSAAKKRAKLSGSSSTSDVDSPD, and TRLSSAKKTSHAAEQSPSAGFTR. 3 stretches are compositionally biased toward polar residues: residues 826–836, 845–855, and 871–892; these read PRTSPKHTSPL, DNSISFSNSWP, and LANQKSSDPTGENFQEKTTAVQ. Over residues 988 to 1000 the composition is skewed to low complexity; it reads SGSSSTSDVDSPD. The interval 1259 to 1481 is TOG 3; the sequence is DIALTEALRL…YIKESVKNLR (223 aa). HEAT repeat units follow at residues 1297–1334 and 1338–1375; these read TKLHETTFAVVQEVKNLRSGVSRAAVVCLGDLFTYLKK and QELDSAVRALLHKAGESNTFIREDVDKALKAMVNNVTP. Positions 1493–1536 are disordered; sequence ASAKGRRSHPGSVGNTRSSSVSRDAFSSSEREVTEVREVPRKSA. Low complexity predominate over residues 1509 to 1520; sequence RSSSVSRDAFSS. The segment covering 1521–1533 has biased composition (basic and acidic residues); that stretch reads SEREVTEVREVPR. The tract at residues 1540-1776 is TOG 4; sequence SLESAEYIKV…LLDVTVLSEL (237 aa). 3 HEAT repeats span residues 1541–1578, 1582–1619, and 1623–1661; these read LESAEYIKVITGLLNAKDFRDRINGIKQLLSDTENNQE, GNIVKIFDAFKSRLHDSNSKVNLVALETMHKMIPLLRD, and PIINMLIPAIVDNNLNSKNPGIYAAATNVVHALSQHVDN.

Belongs to the Crescerin family. In terms of assembly, interacts with ARMC9. Interacts with CCDC66, CEP104 and CSPP1.

The protein resides in the cell projection. Its subcellular location is the cilium. The protein localises to the cytoplasm. It localises to the cytoskeleton. It is found in the cilium axoneme. Functionally, involved in ciliogenesis. It is required for appropriate acetylation and polyglutamylation of ciliary microtubules, and regulation of cilium length. Interacts with microtubules and promotes microtubule polymerization via its HEAT repeat domains, especially those in TOG region 2 and 4. This Mus musculus (Mouse) protein is TOG array regulator of axonemal microtubules protein 1 (Togaram1).